A 301-amino-acid polypeptide reads, in one-letter code: Glycine--tRNA ligase alpha subunit (301 aa).

Belongs to the class-II aminoacyl-tRNA synthetase family. In terms of assembly, tetramer of two alpha and two beta subunits.

It localises to the cytoplasm. It carries out the reaction tRNA(Gly) + glycine + ATP = glycyl-tRNA(Gly) + AMP + diphosphate. This is Glycine--tRNA ligase alpha subunit from Alteromonas mediterranea (strain DSM 17117 / CIP 110805 / LMG 28347 / Deep ecotype).